Here is a 134-residue protein sequence, read N- to C-terminus: Probable glycine cleavage system H protein (134 aa).

In terms of domain architecture, Lipoyl-binding spans 29–110 (TVLVGITDYA…PYGAWIAKIK (82 aa)). Lys70 is modified (N6-lipoyllysine).

Belongs to the GcvH family. In terms of assembly, the glycine cleavage system is composed of four proteins: P, T, L and H. Requires (R)-lipoate as cofactor.

In terms of biological role, the glycine cleavage system catalyzes the degradation of glycine. The H protein shuttles the methylamine group of glycine from the P protein to the T protein. In Pyrococcus horikoshii (strain ATCC 700860 / DSM 12428 / JCM 9974 / NBRC 100139 / OT-3), this protein is Probable glycine cleavage system H protein.